Here is an 887-residue protein sequence, read N- to C-terminus: Alanine--tRNA ligase (887 aa).

His-564, His-568, Cys-676, and His-680 together coordinate Zn(2+). Residues 854–873 form a disordered region; that stretch reads GQGGGGRPDMAQSGGPKGNK.

It belongs to the class-II aminoacyl-tRNA synthetase family. Requires Zn(2+) as cofactor.

It localises to the cytoplasm. The enzyme catalyses tRNA(Ala) + L-alanine + ATP = L-alanyl-tRNA(Ala) + AMP + diphosphate. Catalyzes the attachment of alanine to tRNA(Ala) in a two-step reaction: alanine is first activated by ATP to form Ala-AMP and then transferred to the acceptor end of tRNA(Ala). Also edits incorrectly charged Ser-tRNA(Ala) and Gly-tRNA(Ala) via its editing domain. The chain is Alanine--tRNA ligase from Bartonella henselae (strain ATCC 49882 / DSM 28221 / CCUG 30454 / Houston 1) (Rochalimaea henselae).